Reading from the N-terminus, the 1521-residue chain is Suppressor of Ty 6 homolog (1521 aa).

Positions 1-238 (MDFIDNQAEE…EEIIEDDGEG (238 aa)) are disordered. Over residues 26–41 (KKMKMAKEKSKRKKKM) the composition is skewed to basic residues. Positions 26 to 42 (KKMKMAKEKSKRKKKMV) match the Nuclear localization signal motif. Acidic residues-rich tracts occupy residues 45–56 (SDEDEDDDDDEE) and 67–76 (ADDDDEEEDA). The segment covering 77 to 89 (KSEKSEKSRHSGE) has biased composition (basic and acidic residues). Acidic residues predominate over residues 90-99 (DELDDEDLDL). Basic and acidic residues predominate over residues 126 to 157 (PIRRPNHEDDDLLSERGSDDGDRRKDRGRGDR). 3 stretches are compositionally biased toward acidic residues: residues 166-176 (RSEDDFIEDDG), 191-200 (NLPEGAEDDA), and 209-238 (FNLDEFYDDDDGEDGLEDEEEEIIEDDGEG). The S1 motif domain occupies 1183–1252 (LGDSRQGGCP…ERFSLFLSCK (70 aa)). In terms of domain architecture, SH2 spans 1300–1389 (HPNFHNVSYE…IARFVQPMIQ (90 aa)).

It belongs to the SPT6 family. As to quaternary structure, interacts with glp-1 and lin-12. Abundant in embryos, and less abundant in larvae.

The protein resides in the nucleus. In terms of biological role, histone H3-H4 chaperone that plays a role in maintenance of chromatin structure during RNA polymerase II transcription elongation. Required for several aspects of morphogenesis of C.elegans, including regulation of division in the germline and gut and specification of ventral-uterine precursor cell fate. This is Suppressor of Ty 6 homolog (emb-5) from Caenorhabditis elegans.